Consider the following 359-residue polypeptide: Holliday junction branch migration complex subunit RuvB (359 aa).

A compositionally biased stretch (basic and acidic residues) spans 1–10; it reads MPEHDPHQEN. A disordered region spans residues 1 to 20; sequence MPEHDPHQENRTVSSVRLED. Positions 4 to 188 are large ATPase domain (RuvB-L); the sequence is HDPHQENRTV…FGIPLRLIFY (185 aa). Residues Leu27, Arg28, Gly69, Lys72, Thr73, Thr74, 135–137, Arg178, Tyr188, and Arg225 each bind ATP; that span reads EDF. Thr73 is a Mg(2+) binding site. The tract at residues 189–259 is small ATPAse domain (RuvB-S); that stretch reads TASELELIVS…TADAALQRLE (71 aa). Residues 262–359 form a head domain (RuvB-H) region; sequence SLGLDAMDRR…LLHRDGSADE (98 aa). Residues Arg298, Arg317, and Arg322 each contribute to the DNA site.

Belongs to the RuvB family. Homohexamer. Forms an RuvA(8)-RuvB(12)-Holliday junction (HJ) complex. HJ DNA is sandwiched between 2 RuvA tetramers; dsDNA enters through RuvA and exits via RuvB. An RuvB hexamer assembles on each DNA strand where it exits the tetramer. Each RuvB hexamer is contacted by two RuvA subunits (via domain III) on 2 adjacent RuvB subunits; this complex drives branch migration. In the full resolvosome a probable DNA-RuvA(4)-RuvB(12)-RuvC(2) complex forms which resolves the HJ.

The protein resides in the cytoplasm. It catalyses the reaction ATP + H2O = ADP + phosphate + H(+). In terms of biological role, the RuvA-RuvB-RuvC complex processes Holliday junction (HJ) DNA during genetic recombination and DNA repair, while the RuvA-RuvB complex plays an important role in the rescue of blocked DNA replication forks via replication fork reversal (RFR). RuvA specifically binds to HJ cruciform DNA, conferring on it an open structure. The RuvB hexamer acts as an ATP-dependent pump, pulling dsDNA into and through the RuvAB complex. RuvB forms 2 homohexamers on either side of HJ DNA bound by 1 or 2 RuvA tetramers; 4 subunits per hexamer contact DNA at a time. Coordinated motions by a converter formed by DNA-disengaged RuvB subunits stimulates ATP hydrolysis and nucleotide exchange. Immobilization of the converter enables RuvB to convert the ATP-contained energy into a lever motion, pulling 2 nucleotides of DNA out of the RuvA tetramer per ATP hydrolyzed, thus driving DNA branch migration. The RuvB motors rotate together with the DNA substrate, which together with the progressing nucleotide cycle form the mechanistic basis for DNA recombination by continuous HJ branch migration. Branch migration allows RuvC to scan DNA until it finds its consensus sequence, where it cleaves and resolves cruciform DNA. The protein is Holliday junction branch migration complex subunit RuvB of Granulibacter bethesdensis (strain ATCC BAA-1260 / CGDNIH1).